The following is a 125-amino-acid chain: Lymphocyte antigen 6 complex locus protein G6c (125 aa).

Residues 1-18 form the signal peptide; that stretch reads MKALMLLTLSVLLCWVSA. Positions 20–111 constitute a UPAR/Ly6 domain; the sequence is IRCHSCYKVP…PRPTPALGLV (92 aa). Intrachain disulfides connect C22-C47, C25-C33, and C39-C65. N-linked (GlcNAc...) asparagine glycosylation occurs at N88. The cysteines at positions 92 and 97 are disulfide-linked. S99 carries the GPI-anchor amidated serine lipid modification. A propeptide spans 100 to 125 (removed in mature form); it reads AGPRPTPALGLVFLTSLAGLGLWLLH.

As to quaternary structure, monomer. Post-translationally, N-glycosylated. As to expression, highly expressed at the leading edges of cells, on filopodia.

Its subcellular location is the cell membrane. The protein is Lymphocyte antigen 6 complex locus protein G6c (LY6G6C) of Homo sapiens (Human).